Here is a 1022-residue protein sequence, read N- to C-terminus: MALAIKKRVGTYVETVDGSPPVKKLRLQTLAADAKGGKSGKVGNVERKLTALNQLDAYVGNLPAGALVLPTGTPVASTGAPSTGVIGNPPAAATGAPPMTAANSRELLELLVKITDEISYEDVEMGELKEVASKIFQLYQLQERDSDTSIRVKLLELLSGLGCECATEQALTMIIDYFIFLLRKEVSQKVLAQGMMCLFRIGERRKHMLPISYKTQVAHLAKEQLRSGSAHTQKNAMLVIGRFATKMEGERHYVWKLAFYIDSQDSSVRAQALHALLTLGERGSQLPAVLYKRAVEAMKDDYECVRKEALQLVFMLGNRHPDYILPSDRQQEELRMIDAAFSKVCEALCDLSLQIRVLAAELLGGMTAVSREFLHQTLDKKLMSNLRRKRTAHERGARLVASGEWSSGKRWADDAPQEHLDAQSISIIASGACGALIHGLEDEFLEVRTAAVASMCKLALSRPDFAVTSLDFLVDMFNDEIEDVRLKAIYSLTAIAKHIVLREDQLEIMLGSLEDYSVDVREGLHLMLGACRVSTQTCLLMVVQKLLDVLAKYPQDRNSTYACMRKIGQKHPHLVMAVAVHLLYVHPFFETPERDVEDPAYLCVLILVFNAAEHLVPIISLLPTATHRHYAYLRDSMPNLVPQLPIEGASSASATHRIDSAMHQAGSSAEYLQMILSHIEEIFTMTDERLELLQTAQSNLQRLGSIDAGMYGTSNFLETFLAAQIQIEQMQRCASTQRSRVPLKESLAALIRNCLKLQHTFSGLNYGDILQVKQLRLRACALHLVLVVRDRSQSALGPCQMLLQTAGDISEFIKANTKDEEEKPPVVETDMPMKESVSRDAQPDSFTRQLLIKLDGISDPKPGRVFREILPLVQQAPPLALPPANDKIRRCVANILEPCPLQSQDNVIKVTAGLIAAVPFVAEIDNLLESQKADMRIKIKYPDQHMHTVVPKQSDFKPIMTEQGEHKTNVRLRTTILLSHSVWTESSLVEIQLCLAVRPGSELELCKPAKVLFAPKPVRRGI.

The 1D-myo-inositol hexakisphosphate site is built by threonine 148 and lysine 184. The interval lysine 818–aspartate 840 is disordered.

This sequence belongs to the Integrator subunit 4 family. Belongs to the multiprotein complex Integrator, at least composed of IntS1, IntS2, IntS3, IntS4, omd/IntS5, IntS6, defl/IntS7, IntS8, IntS9, IntS10, IntS11, IntS12, asun/IntS13, IntS14 and IntS15. The core complex associates with protein phosphatase 2A subunits mts/PP2A and Pp2A-29B, to form the Integrator-PP2A (INTAC) complex. IntS4 is part of the RNA endonuclease subcomplex, composed of IntS4, IntS9, IntS11 and inositol hexakisphosphate (InsP6).

The protein resides in the nucleus. Functionally, component of the integrator complex, a multiprotein complex that terminates RNA polymerase II (Pol II) transcription in the promoter-proximal region of genes. The integrator complex provides a quality checkpoint during transcription elongation by driving premature transcription termination of transcripts that are unfavorably configured for transcriptional elongation: the complex terminates transcription by (1) catalyzing dephosphorylation of the C-terminal domain (CTD) of Pol II subunit Polr2A/Rbp1 and Spt5, and (2) degrading the exiting nascent RNA transcript via endonuclease activity. The integrator complex is also involved in the 3'-end processing of the U7 snRNA, and also the spliceosomal snRNAs U1, U2, U4 and U5. The sequence is that of Integrator complex subunit 4 from Drosophila melanogaster (Fruit fly).